The primary structure comprises 155 residues: Endoribonuclease YbeY (155 aa).

Residues H120, H124, and H130 each coordinate Zn(2+).

Belongs to the endoribonuclease YbeY family. Requires Zn(2+) as cofactor.

It is found in the cytoplasm. In terms of biological role, single strand-specific metallo-endoribonuclease involved in late-stage 70S ribosome quality control and in maturation of the 3' terminus of the 16S rRNA. This is Endoribonuclease YbeY from Alkaliphilus metalliredigens (strain QYMF).